Here is a 413-residue protein sequence, read N- to C-terminus: Histidinol-phosphate aminotransferase, chloroplastic (413 aa).

The N-terminal 35 residues, 1-35 (MGVIELCNTSSICIGRAKPSCCSIERNQRRRIICM), are a transit peptide targeting the chloroplast. An N6-(pyridoxal phosphate)lysine modification is found at Lys-273.

Belongs to the class-II pyridoxal-phosphate-dependent aminotransferase family. Histidinol-phosphate aminotransferase subfamily. In terms of assembly, homodimer. It depends on pyridoxal 5'-phosphate as a cofactor. As to expression, mainly expressed in green tissues.

It is found in the plastid. Its subcellular location is the chloroplast. The catalysed reaction is L-histidinol phosphate + 2-oxoglutarate = 3-(imidazol-4-yl)-2-oxopropyl phosphate + L-glutamate. The protein operates within amino-acid biosynthesis; L-histidine biosynthesis; L-histidine from 5-phospho-alpha-D-ribose 1-diphosphate: step 7/9. The protein is Histidinol-phosphate aminotransferase, chloroplastic (HPA) of Nicotiana tabacum (Common tobacco).